The sequence spans 143 residues: ATP synthase subunit b' (143 aa).

Residues 6–26 (ATLPFMALQFLLLAAVLNAIF) traverse the membrane as a helical segment.

It belongs to the ATPase B chain family. F-type ATPases have 2 components, F(1) - the catalytic core - and F(0) - the membrane proton channel. F(1) has five subunits: alpha(3), beta(3), gamma(1), delta(1), epsilon(1). F(0) has four main subunits: a(1), b(1), b'(1) and c(10-14). The alpha and beta chains form an alternating ring which encloses part of the gamma chain. F(1) is attached to F(0) by a central stalk formed by the gamma and epsilon chains, while a peripheral stalk is formed by the delta, b and b' chains.

The protein localises to the cellular thylakoid membrane. Functionally, f(1)F(0) ATP synthase produces ATP from ADP in the presence of a proton or sodium gradient. F-type ATPases consist of two structural domains, F(1) containing the extramembraneous catalytic core and F(0) containing the membrane proton channel, linked together by a central stalk and a peripheral stalk. During catalysis, ATP synthesis in the catalytic domain of F(1) is coupled via a rotary mechanism of the central stalk subunits to proton translocation. Component of the F(0) channel, it forms part of the peripheral stalk, linking F(1) to F(0). The b'-subunit is a diverged and duplicated form of b found in plants and photosynthetic bacteria. The polypeptide is ATP synthase subunit b' (Nostoc punctiforme (strain ATCC 29133 / PCC 73102)).